The primary structure comprises 457 residues: Multidrug resistance protein MdtK (457 aa).

A run of 12 helical transmembrane segments spans residues 11-31, 53-73, 93-113, 127-147, 160-180, 189-209, 243-263, 276-296, 314-334, 350-370, 387-407, and 418-438; these read LLAL…MGFV, IWLP…PVIA, WLAG…GYII, AVGY…FQVA, GMVM…IFIY, GGVG…LAMV, LPIA…ALLV, IALN…AAVT, AART…IFTV, VVTL…SDSI, IFYI…YILA, and PAGF…MMML.

Belongs to the multi antimicrobial extrusion (MATE) (TC 2.A.66.1) family. MdtK subfamily.

Its subcellular location is the cell inner membrane. Its function is as follows. Multidrug efflux pump that functions probably as a Na(+)/drug antiporter. The protein is Multidrug resistance protein MdtK of Escherichia coli (strain SE11).